Here is a 512-residue protein sequence, read N- to C-terminus: uncharacterized protein (512 aa).

This is an uncharacterized protein from Methanocaldococcus jannaschii (strain ATCC 43067 / DSM 2661 / JAL-1 / JCM 10045 / NBRC 100440) (Methanococcus jannaschii).